A 626-amino-acid polypeptide reads, in one-letter code: Phosphomethylpyrimidine synthase (626 aa).

Residues Asn-237, Met-266, Tyr-295, His-331, 351–353, 392–395, and Glu-431 contribute to the substrate site; these read SRG and DGLR. Zn(2+) is bound at residue His-435. A substrate-binding site is contributed by Tyr-458. His-499 contributes to the Zn(2+) binding site. [4Fe-4S] cluster contacts are provided by Cys-579, Cys-582, and Cys-587.

Belongs to the ThiC family. In terms of assembly, homodimer. [4Fe-4S] cluster is required as a cofactor.

The enzyme catalyses 5-amino-1-(5-phospho-beta-D-ribosyl)imidazole + S-adenosyl-L-methionine = 4-amino-2-methyl-5-(phosphooxymethyl)pyrimidine + CO + 5'-deoxyadenosine + formate + L-methionine + 3 H(+). Its pathway is cofactor biosynthesis; thiamine diphosphate biosynthesis. Its function is as follows. Catalyzes the synthesis of the hydroxymethylpyrimidine phosphate (HMP-P) moiety of thiamine from aminoimidazole ribotide (AIR) in a radical S-adenosyl-L-methionine (SAM)-dependent reaction. The sequence is that of Phosphomethylpyrimidine synthase from Cupriavidus pinatubonensis (strain JMP 134 / LMG 1197) (Cupriavidus necator (strain JMP 134)).